The following is a 264-amino-acid chain: Movement protein (264 aa).

The disordered stretch occupies residues 211–264 (RTKSSKRGPKNNNNLGKGRSGGRPKPKSVDEVEEEFDNLIEDEAETSVADSDSY). Residues 241 to 255 (EVEEEFDNLIEDEAE) show a composition bias toward acidic residues.

The protein belongs to the tobamovirus movement protein family. In terms of assembly, binds to host RBCS at the plasmodesmata; this interaction seems required for viral systemic movement. In resistant plants, interacts with host MBP2C at host microtubules; this interaction prevents virus cell to cell movement. In resistant plants, interacts with host resistance (R) protein (e.g. tomato ToMV resistance protein TM-2(2), AC Q71BG9) at the host plasma membrane; this interaction triggers host defense responses leading to programmed cell death.

It is found in the host cytoplasm. The protein resides in the host cytoskeleton. The protein localises to the host cell junction. Its subcellular location is the host plasmodesma. Its function is as follows. Transports viral genome to neighboring plant cells directly through plasmosdesmata, without any budding. The movement protein allows efficient cell to cell propagation, by bypassing the host cell wall barrier. Forms a ribonucleoprotein complex with viral RNA. Binds microtubules and modulates microtubule stability. Can bind double-stranded DNA. Triggers host hypersensitive defense reaction in incompatible plants harboring resistance (R) proteins. In Antirrhinum majus (Garden snapdragon), this protein is Movement protein (MP).